Here is a 480-residue protein sequence, read N- to C-terminus: Vinorine hydroxylase (480 aa).

The helical transmembrane segment at 3 to 23 (LLQILLAIAGLLAILLLQKQW) threads the bilayer. C418 contacts heme.

Belongs to the cytochrome P450 family. Heme is required as a cofactor. As to expression, mainly expressed in roots and, to a lesser extent, in leaves.

Its subcellular location is the membrane. The catalysed reaction is vinorine + reduced [NADPH--hemoprotein reductase] + O2 = vomilenine + oxidized [NADPH--hemoprotein reductase] + H2O + H(+). It catalyses the reaction vomilenine = perakine. Its pathway is alkaloid biosynthesis; ajmaline biosynthesis. A cytochrome P450 monooxygenase involved in the biosynthesis of ajmaline-type monoterpenoid indole alkaloids (MIAs) natural products, important plant-derived pharmaceuticals used in the therapy of heart disorders. Catalyzes the hydroxylation of vinorine to vomilenine, an intermediate chemical in the biosynthesis of ajmaline. Supports also vomilenine isomerization to perakine. This is Vinorine hydroxylase from Rauvolfia serpentina (Serpentine wood).